We begin with the raw amino-acid sequence, 371 residues long: Cytochrome b (371 aa).

Transmembrane regions (helical) follow at residues 25–45 (FGSM…FLAV), 69–90 (WMMQ…YIHI), 105–125 (WMSG…GYVL), and 170–190 (FFAL…LHII). H75 and H89 together coordinate heme b. Residues H174 and H188 each contribute to the heme b site. An a ubiquinone-binding site is contributed by H193. 4 consecutive transmembrane segments (helical) span residues 218-238 (YKDL…VSFF), 280-300 (LGGA…PFMH), 312-332 (LSQL…WAAT), and 339-358 (YIMI…LSIP).

It belongs to the cytochrome b family. In terms of assembly, the cytochrome bc1 complex contains 3 respiratory subunits (MT-CYB, CYC1 and UQCRFS1), 2 core proteins (UQCRC1 and UQCRC2) and probably 6 low-molecular weight proteins. Requires heme b as cofactor.

It is found in the mitochondrion inner membrane. Functionally, component of the ubiquinol-cytochrome c reductase complex (complex III or cytochrome b-c1 complex) that is part of the mitochondrial respiratory chain. The b-c1 complex mediates electron transfer from ubiquinol to cytochrome c. Contributes to the generation of a proton gradient across the mitochondrial membrane that is then used for ATP synthesis. This Simalia amethistina (Amethystine python) protein is Cytochrome b (MT-CYB).